Reading from the N-terminus, the 349-residue chain is Phosphate acyltransferase (349 aa).

It belongs to the PlsX family. In terms of assembly, homodimer. Probably interacts with PlsY.

The protein resides in the cytoplasm. It catalyses the reaction a fatty acyl-[ACP] + phosphate = an acyl phosphate + holo-[ACP]. It functions in the pathway lipid metabolism; phospholipid metabolism. In terms of biological role, catalyzes the reversible formation of acyl-phosphate (acyl-PO(4)) from acyl-[acyl-carrier-protein] (acyl-ACP). This enzyme utilizes acyl-ACP as fatty acyl donor, but not acyl-CoA. The protein is Phosphate acyltransferase of Albidiferax ferrireducens (strain ATCC BAA-621 / DSM 15236 / T118) (Rhodoferax ferrireducens).